The sequence spans 1410 residues: Non-secreted LysM effector LysM15 (1410 aa).

LysM domains lie at 1179 to 1225 (TTYT…DICM) and 1231 to 1277 (TQYT…EILG). Residues 1291 to 1303 (TTGDGITTTPGNG) show a composition bias toward low complexity. The tract at residues 1291-1317 (TTGDGITTTPGNGEYAQGVVSPPENST) is disordered. The LysM 3 domain occupies 1328–1375 (RWYSATADDLCVQICLKSGVSAKLFKAANPSLAADCDNSLIAGDAYCV).

The protein belongs to the secreted LysM effector family.

In terms of biological role, non-secreted LysM effector that might be involved in manipulation of host defenses for successful infection. This Penicillium expansum (Blue mold rot fungus) protein is Non-secreted LysM effector LysM15.